The sequence spans 1037 residues: Guanine nucleotide-binding protein G(s) subunit alpha isoforms XLas (1037 aa).

Disordered regions lie at residues 1–105 (MGVR…MPFE), 185–224 (APGGPGAAGVPGAPPEEPQALRPAKAGSRGGYSPPPEETM), 283–588 (SPSQ…TSGC), and 640–666 (PLAEKRRQMRKEALEKRAQKRAEKKRS). Over residues 33 to 46 (APGAAAPGAGPSPA) the composition is skewed to low complexity. The segment covering 343–354 (PDKRERAERPPV) has biased composition (basic and acidic residues). Composition is skewed to low complexity over residues 361–408 (MEGA…GATP) and 416–521 (APAD…PASG). Positions 553 to 565 (GKSESSRGRRVYY) are enriched in basic and acidic residues. Residues 572–583 (SDDDSSGDESDD) are compositionally biased toward acidic residues. Basic and acidic residues predominate over residues 640–660 (PLAEKRRQMRKEALEKRAQKR). Positions 641–667 (LAEKRRQMRKEALEKRAQKRAEKKRSK) form a coiled coil. Positions 682-1037 (CTHRLLLLGA…RMHLRQYELL (356 aa)) constitute a G-alpha domain. Positions 685–698 (RLLLLGAGESGKST) are G1 motif. 690-698 (GAGESGKST) serves as a coordination point for GTP. Residue serine 697 participates in Mg(2+) binding. Residues 711 to 734 (FNGEGGEEDPQAARSNSDGEKATK) are disordered. Positions 730 to 756 (EKATKVQDIKNNLKEAIETIVAAMSNL) form a coiled coil. The interval 839–847 (DLLRCRVLT) is G2 motif. GTP is bound by residues 840 to 847 (LLRCRVLT), 866 to 870 (DVGGQ), and 935 to 938 (NKQD). An ADP-ribosylarginine; by cholera toxin modification is found at arginine 844. A Mg(2+)-binding site is contributed by threonine 847. Positions 862-871 (FHMFDVGGQR) are G3 motif. The interval 931–938 (ILFLNKQD) is G4 motif. At serine 995 the chain carries Phosphoserine. Residues 1007–1012 (TCAVDT) are G5 motif. Alanine 1009 provides a ligand contact to GTP.

The protein belongs to the G-alpha family. G(s) subfamily. In terms of assembly, g proteins are composed of 3 units; alpha, beta and gamma. The alpha chain contains the guanine nucleotide binding site. Interacts through its N-terminal region with ALEX which is produced from the same locus in a different open reading frame. This interaction may inhibit its adenylyl cyclase-stimulating activity. Interacts with MAGED2.

Its subcellular location is the cell membrane. The protein localises to the apical cell membrane. The catalysed reaction is GTP + H2O = GDP + phosphate + H(+). Functionally, guanine nucleotide-binding proteins (G proteins) function as transducers in numerous signaling pathways controlled by G protein-coupled receptors (GPCRs). The alpha chain contains the guanine nucleotide binding site and alternates between an active, GTP-bound state and an inactive, GDP-bound state. Signaling by an activated GPCR promotes GDP release and GTP binding. The alpha subunit has a low GTPase activity that converts bound GTP to GDP, thereby terminating the signal. Both GDP release and GTP hydrolysis are modulated by numerous regulatory proteins. Signaling involves the activation of adenylyl cyclases, resulting in increased levels of the signaling molecule cAMP. GNAS functions downstream of several GPCRs, including beta-adrenergic receptors. XLas isoforms interact with the same set of receptors as Gnas isoforms. The polypeptide is Guanine nucleotide-binding protein G(s) subunit alpha isoforms XLas (GNAS) (Homo sapiens (Human)).